We begin with the raw amino-acid sequence, 170 residues long: Peptide deformylase (170 aa).

Fe cation is bound by residues C91 and H133. E134 is an active-site residue. H137 is a binding site for Fe cation.

This sequence belongs to the polypeptide deformylase family. Fe(2+) is required as a cofactor.

It catalyses the reaction N-terminal N-formyl-L-methionyl-[peptide] + H2O = N-terminal L-methionyl-[peptide] + formate. Functionally, removes the formyl group from the N-terminal Met of newly synthesized proteins. Requires at least a dipeptide for an efficient rate of reaction. N-terminal L-methionine is a prerequisite for activity but the enzyme has broad specificity at other positions. This Yersinia pseudotuberculosis serotype O:1b (strain IP 31758) protein is Peptide deformylase.